The primary structure comprises 385 residues: Cytochrome b (385 aa).

The Mitochondrial matrix portion of the chain corresponds to 1–27; the sequence is MAFRKSNVYLSLVNSYIIDSPQPSSIN. Tyr16 serves as a coordination point for a ubiquinone. The chain crosses the membrane as a helical span at residues 28–51; the sequence is YWWNMGSLLGLCLVIQIVTGIFMA. Residues 52 to 74 lie on the Mitochondrial intermembrane side of the membrane; it reads MHYSSNIELAFSSVEHIMRDVHN. The helical transmembrane segment at 75 to 102 threads the bilayer; the sequence is GYILRYLHANGASFFFMVMFMHMAKGLY. Heme b-binding residues include His82 and His96. The Mitochondrial matrix portion of the chain corresponds to 103–110; sequence YGSYRSPR. Residues 111-135 traverse the membrane as a helical segment; sequence VTLWNVGVIIFILTIATAFLGYCCV. Residues 136–172 lie on the Mitochondrial intermembrane side of the membrane; sequence YGQMSHWGATVITNLFSAIPFVGNDIVSWLWGGFSVS. The helical transmembrane segment at 173–204 threads the bilayer; the sequence is NPTIQRFFALHYLVPFIIAAMVIMHLMALHIH. Heme b is bound by residues His183 and His197. His202 is a binding site for a ubiquinone. Residues 205–223 lie on the Mitochondrial matrix side of the membrane; sequence GSSNPLGITGNLDRIPMHS. A helical membrane pass occupies residues 224–246; that stretch reads YFIFKDLVTVFLFMLILALFVFY. Residues 247–287 are Mitochondrial intermembrane-facing; sequence SPNTLGHPDNYIPGNPLVTPASIVPEWYLLPFYAILRSIPD. Residues 288 to 308 traverse the membrane as a helical segment; it reads KLLGVITMFAAILVLLVLPFT. Topologically, residues 309–319 are mitochondrial matrix; the sequence is DRSVVRGNTFK. A helical transmembrane segment spans residues 320-340; sequence VLSKFFFFIFVFNFVLLGQIG. Topologically, residues 341 to 347 are mitochondrial intermembrane; it reads ACHVEVP. A helical transmembrane segment spans residues 348–364; sequence YVLMGQIATFIYFAYFL. Residues 365–385 are Mitochondrial matrix-facing; that stretch reads IIVPVISTIENVLFYIGRVNK.

Belongs to the cytochrome b family. As to quaternary structure, component of the ubiquinol-cytochrome c oxidoreductase (cytochrome b-c1 complex, complex III, CIII), a multisubunit enzyme composed of 10 subunits. The complex is composed of 3 respiratory subunits cytochrome b (COB), cytochrome c1 (CYT1) and Rieske protein (RIP1), 2 core protein subunits COR1 and QCR2, and 5 low-molecular weight protein subunits QCR6, QCR7, QCR8, QCR9 and QCR10. The complex exists as an obligatory dimer and forms supercomplexes (SCs) in the inner mitochondrial membrane with a monomer or a dimer of cytochrome c oxidase (complex IV, CIV), resulting in 2 different assemblies (supercomplexes III(2)IV and III(2)IV(2)). It depends on heme b as a cofactor.

Its subcellular location is the mitochondrion inner membrane. The enzyme catalyses a quinol + 2 Fe(III)-[cytochrome c](out) = a quinone + 2 Fe(II)-[cytochrome c](out) + 2 H(+)(out). In terms of biological role, component of the ubiquinol-cytochrome c oxidoreductase, a multisubunit transmembrane complex that is part of the mitochondrial electron transport chain which drives oxidative phosphorylation. The respiratory chain contains 3 multisubunit complexes succinate dehydrogenase (complex II, CII), ubiquinol-cytochrome c oxidoreductase (cytochrome b-c1 complex, complex III, CIII) and cytochrome c oxidase (complex IV, CIV), that cooperate to transfer electrons derived from NADH and succinate to molecular oxygen, creating an electrochemical gradient over the inner membrane that drives transmembrane transport and the ATP synthase. The cytochrome b-c1 complex catalyzes electron transfer from ubiquinol to cytochrome c, linking this redox reaction to translocation of protons across the mitochondrial inner membrane, with protons being carried across the membrane as hydrogens on the quinol. In the process called Q cycle, 2 protons are consumed from the matrix, 4 protons are released into the intermembrane space and 2 electrons are passed to cytochrome c. Cytochrome b is a catalytic core subunit containing 2 b-type hemes BL and BH topographically segregated in the quinone reduction (Qi) and quinol oxidation (Q0) sites on opposite sides of the membrane. The polypeptide is Cytochrome b (COB) (Saccharomyces cerevisiae (strain ATCC 204508 / S288c) (Baker's yeast)).